The sequence spans 456 residues: Argininosuccinate lyase (456 aa).

The protein belongs to the lyase 1 family. Argininosuccinate lyase subfamily.

The protein resides in the cytoplasm. The catalysed reaction is 2-(N(omega)-L-arginino)succinate = fumarate + L-arginine. Its pathway is amino-acid biosynthesis; L-arginine biosynthesis; L-arginine from L-ornithine and carbamoyl phosphate: step 3/3. The sequence is that of Argininosuccinate lyase from Carboxydothermus hydrogenoformans (strain ATCC BAA-161 / DSM 6008 / Z-2901).